A 127-amino-acid polypeptide reads, in one-letter code: uncharacterized protein (127 aa).

Thr-30 is modified (phosphothreonine). A disordered region spans residues 51-75; sequence APTYEQVLYPPASQKKTSNSTSEES. Position 63 is a phosphoserine (Ser-63).

This is an uncharacterized protein from Mus musculus (Mouse).